The chain runs to 143 residues: High mobility group protein B (143 aa).

The segment at 1–22 is disordered; the sequence is MSKAASQYATLEDLPSKPKRPQ. Residues 18 to 86 constitute a DNA-binding region (HMG box); sequence PKRPQTGFFI…TYDKQNDQWK (69 aa). Residue Ala-70 is modified to Blocked amino end (Ala). 2 stretches are compositionally biased toward basic and acidic residues: residues 100 to 120 and 131 to 143; these read AKKA…ELEK and AKKD…AKKK. The segment at 100–143 is disordered; the sequence is AKKALKEKTKKSKAAEKELEKSKKKAPAAAPAKKDDKKAPAKKK.

The protein resides in the nucleus. Its subcellular location is the chromosome. This Tetrahymena thermophila protein is High mobility group protein B.